The following is a 252-amino-acid chain: Uridylate kinase (252 aa).

An ATP-binding site is contributed by 20 to 23 (KLSG). The interval 28 to 33 (GGGGLG) is involved in allosteric activation by GTP. Residue G62 coordinates UMP. Positions 63 and 67 each coordinate ATP. Residues D82 and 143-150 (MGMPYFST) each bind UMP. ATP contacts are provided by N171, Y177, and D180.

It belongs to the UMP kinase family. In terms of assembly, homohexamer.

It localises to the cytoplasm. The catalysed reaction is UMP + ATP = UDP + ADP. The protein operates within pyrimidine metabolism; CTP biosynthesis via de novo pathway; UDP from UMP (UMPK route): step 1/1. Allosterically activated by GTP. Inhibited by UTP. In terms of biological role, catalyzes the reversible phosphorylation of UMP to UDP. In Streptomyces avermitilis (strain ATCC 31267 / DSM 46492 / JCM 5070 / NBRC 14893 / NCIMB 12804 / NRRL 8165 / MA-4680), this protein is Uridylate kinase.